A 284-amino-acid chain; its full sequence is Nucleotide-binding protein TTE1834 (284 aa).

8-15 (GLSGAGKT) contributes to the ATP binding site. 58-61 (DLRG) provides a ligand contact to GTP.

Belongs to the RapZ-like family.

Its function is as follows. Displays ATPase and GTPase activities. The polypeptide is Nucleotide-binding protein TTE1834 (Caldanaerobacter subterraneus subsp. tengcongensis (strain DSM 15242 / JCM 11007 / NBRC 100824 / MB4) (Thermoanaerobacter tengcongensis)).